Consider the following 502-residue polypeptide: Maturase K (502 aa).

It belongs to the intron maturase 2 family. MatK subfamily.

Its subcellular location is the plastid. The protein localises to the chloroplast. Usually encoded in the trnK tRNA gene intron. Probably assists in splicing its own and other chloroplast group II introns. Binds its homologous trnK precursor transcript. The polypeptide is Maturase K (Sinapis alba (White mustard)).